The following is a 238-amino-acid chain: MGRKWANIVAKKTAKDGATSKVYAKFGVEIYVAAKQGEPDPELNTALKFVIDRAKQAQVPKHVIDKAIDKAKGNTDETFVEGRYEGFGPNGSMIIVDTLTSNVNRTAANVRAAYGKNGGNMGAAGSVSYLFDKKGVIVFKGDDADSIFELLLEADVDVDDVEAEDGSITVYTAPTDLHKAILALRESGISEFQVTELEMIPQSEVTLEGDDLAVFEKLVDALEADDDVQKVYHNVADV.

The protein belongs to the TACO1 family. YeeN subfamily.

It localises to the cytoplasm. The chain is Probable transcriptional regulatory protein SZO_02930 from Streptococcus equi subsp. zooepidemicus (strain H70).